The primary structure comprises 422 residues: WD repeat and SOCS box-containing protein 1 (422 aa).

5 WD repeats span residues serine 124 to asparagine 165, aspartate 168 to lysine 208, glycine 212 to lysine 251, glycine 254 to glutamate 293, and aspartate 309 to valine 346. The region spanning asparagine 374–methionine 422 is the SOCS box domain.

Component of a probable ECS E3 ubiquitin-protein ligase complex that contains the Elongin BC complex.

It participates in protein modification; protein ubiquitination. Its function is as follows. Probable substrate-recognition component of a SCF-like ECS (Elongin-Cullin-SOCS-box protein) E3 ubiquitin-protein ligase complex which mediates the ubiquitination and subsequent proteasomal degradation of target proteins. This is WD repeat and SOCS box-containing protein 1 (wsb1) from Xenopus tropicalis (Western clawed frog).